A 407-amino-acid polypeptide reads, in one-letter code: Glucan 1,3-beta-glucosidase 1 (407 aa).

Positions 1-22 are cleaved as a signal peptide; sequence MLSFTSVFSFFLHALLLKTAFS. The active-site Proton donor is E213. C295 and C406 are joined by a disulfide. Catalysis depends on E312, which acts as the Nucleophile.

The protein belongs to the glycosyl hydrolase 5 (cellulase A) family.

Its subcellular location is the secreted. It catalyses the reaction Successive hydrolysis of beta-D-glucose units from the non-reducing ends of (1-&gt;3)-beta-D-glucans, releasing alpha-glucose.. Its function is as follows. Beta-glucanases participate in the metabolism of beta-glucan, the main structural component of the cell wall. It could also function biosynthetically as a transglycosylase. In Schizosaccharomyces pombe (strain 972 / ATCC 24843) (Fission yeast), this protein is Glucan 1,3-beta-glucosidase 1 (exg1).